The chain runs to 369 residues: MVGCAEYKNAPMKLPKEVAQELAETAKKLVAAGKGILAADESTQTIKKRFDNIKIENTVENRASYRDLLFGTKGLGKFISGAILFEETLFQKNEAGVPLVNLLHDEGIIPGIKVDKGLVSIPCTDDEKSTQGLDGLAERCKEYYKAGARFAKWRAVLVIDPAKGKPTDLSIQEVSWGLARYASICQQNKLVPIVEPEILADGAHTIEVCATVTQKVLASVFKALHDNGVLLEGALLKPNMVTAGYDCTEKTKTDDIGFFTVRTLRRTVPPALPGVVFLSGGQSEEDASINLNSINVLGPHPWALTFSYGRALQASVLNTWQGKKENVAKARAVLLQRAEANSLATYGKYKGGAGGSTAGASLYEKKYVY.

D40 provides a ligand contact to dihydroxyacetone phosphate. D-glyceraldehyde 3-phosphate contacts are provided by S42 and T45. Beta-D-fructose 1,6-bisphosphate is bound at residue R49. K113 is a D-glyceraldehyde 3-phosphate binding site. A dihydroxyacetone phosphate-binding site is contributed by K152. E195 lines the D-glyceraldehyde 3-phosphate pocket. Catalysis depends on E195, which acts as the Proton acceptor. Residues K237, S279, and G280 each coordinate dihydroxyacetone phosphate. Residue K237 is the Schiff-base intermediate with dihydroxyacetone phosphate of the active site. Residues 279–281 (SGG) and S307 each bind beta-D-fructose 1,6-bisphosphate. Residues G309 and R310 each coordinate dihydroxyacetone phosphate. R310 provides a ligand contact to beta-D-fructose 1,6-bisphosphate.

The protein belongs to the class I fructose-bisphosphate aldolase family.

The protein localises to the cytoplasm. It is found in the membrane. The protein resides in the host cell membrane. It carries out the reaction beta-D-fructose 1,6-bisphosphate = D-glyceraldehyde 3-phosphate + dihydroxyacetone phosphate. Its pathway is carbohydrate degradation; glycolysis; D-glyceraldehyde 3-phosphate and glycerone phosphate from D-glucose: step 4/4. Functionally, plays a key role in glycolysis by catalyzing the cleavage of fructose 1,6-bisphosphate into dihydroxyacetone phosphate and glyceraldehyde 3-phosphate. The chain is Fructose-bisphosphate aldolase 2 (ALDO2) from Plasmodium berghei (strain Anka).